The primary structure comprises 353 residues: Phosphoribosylformylglycinamidine cyclo-ligase (353 aa).

The protein belongs to the AIR synthase family.

It localises to the cytoplasm. The enzyme catalyses 2-formamido-N(1)-(5-O-phospho-beta-D-ribosyl)acetamidine + ATP = 5-amino-1-(5-phospho-beta-D-ribosyl)imidazole + ADP + phosphate + H(+). The protein operates within purine metabolism; IMP biosynthesis via de novo pathway; 5-amino-1-(5-phospho-D-ribosyl)imidazole from N(2)-formyl-N(1)-(5-phospho-D-ribosyl)glycinamide: step 2/2. This chain is Phosphoribosylformylglycinamidine cyclo-ligase, found in Pseudomonas aeruginosa (strain ATCC 15692 / DSM 22644 / CIP 104116 / JCM 14847 / LMG 12228 / 1C / PRS 101 / PAO1).